The primary structure comprises 496 residues: Glycogen synthase (496 aa).

ADP-alpha-D-glucose is bound at residue Lys-15.

It belongs to the glycosyltransferase 1 family. Bacterial/plant glycogen synthase subfamily.

It catalyses the reaction [(1-&gt;4)-alpha-D-glucosyl](n) + ADP-alpha-D-glucose = [(1-&gt;4)-alpha-D-glucosyl](n+1) + ADP + H(+). It functions in the pathway glycan biosynthesis; glycogen biosynthesis. Functionally, synthesizes alpha-1,4-glucan chains using ADP-glucose. The sequence is that of Glycogen synthase from Natranaerobius thermophilus (strain ATCC BAA-1301 / DSM 18059 / JW/NM-WN-LF).